A 135-amino-acid chain; its full sequence is C-type natriuretic peptide (135 aa).

The first 25 residues, 1–25 (MSGHTSFYCGLLLLLLIQVQARPRA), serve as a signal peptide directing secretion. A propeptide spanning residues 26-113 (DDSLQVLSRL…PLRFKGRSKK (88 aa)) is cleaved from the precursor. Positions 46-67 (EELNNEAQEISPAASLPDLNTD) are disordered. A disulfide bond links C119 and C135.

It belongs to the natriuretic peptide family.

It is found in the secreted. Hormone which may be vasoactive and natriuretic. Has a cGMP-stimulating activity. This is C-type natriuretic peptide from Squalus acanthias (Spiny dogfish).